Here is a 787-residue protein sequence, read N- to C-terminus: Aconitate hydratase, mitochondrial (787 aa).

A mitochondrion-targeting transit peptide spans 1 to 33 (MISTRLARAGALAPKSRLFLGTRAFATVGDSPL). Residues Gln104 and 197–199 (DSH) each bind substrate. [4Fe-4S] cluster is bound by residues Cys390, Cys453, and Cys456. Residues Arg479 and Arg484 each contribute to the substrate site. The disordered stretch occupies residues 529–559 (LQPPTGEGLPAKGYDPGRDTYQAPPADRSSV). Substrate-binding positions include Arg612 and 675-676 (SR).

Belongs to the aconitase/IPM isomerase family. [4Fe-4S] cluster serves as cofactor.

It localises to the mitochondrion. It carries out the reaction citrate = D-threo-isocitrate. It catalyses the reaction (2R)-homocitrate = cis-homoaconitate + H2O. The protein operates within carbohydrate metabolism; tricarboxylic acid cycle; isocitrate from oxaloacetate: step 2/2. Its pathway is amino-acid biosynthesis; L-lysine biosynthesis via AAA pathway; L-alpha-aminoadipate from 2-oxoglutarate: step 2/5. In terms of biological role, catalyzes the isomerization of citrate to isocitrate via cis-aconitate, a step in the citric acid cycle. Also catalyzes the reversible dehydration of (R)-homocitrate to cis-homoaconitate, a step in the alpha-aminoadipate pathway for lysine biosynthesis. This is Aconitate hydratase, mitochondrial (acoA) from Aspergillus fumigatus (strain ATCC MYA-4609 / CBS 101355 / FGSC A1100 / Af293) (Neosartorya fumigata).